A 108-amino-acid polypeptide reads, in one-letter code: Nucleoid-associated protein BMASAVP1_A1850 (108 aa).

The tract at residues 84-108 is disordered; the sequence is EATSQEKMSGMTSGLPLPPGFKLPF. Polar residues predominate over residues 85–95; sequence ATSQEKMSGMT. The span at 99–108 shows a compositional bias: pro residues; that stretch reads PLPPGFKLPF.

Belongs to the YbaB/EbfC family. Homodimer.

It localises to the cytoplasm. The protein resides in the nucleoid. Binds to DNA and alters its conformation. May be involved in regulation of gene expression, nucleoid organization and DNA protection. The sequence is that of Nucleoid-associated protein BMASAVP1_A1850 from Burkholderia mallei (strain SAVP1).